Consider the following 255-residue polypeptide: Cytosolic Fe-S cluster assembly factor Nubp2 homolog (255 aa).

14–21 contributes to the ATP binding site; it reads GKGGVGKS. [4Fe-4S] cluster is bound by residues cysteine 185 and cysteine 188.

Belongs to the Mrp/NBP35 ATP-binding proteins family. NUBP2/CFD1 subfamily. Heterotetramer of 2 Nubp1 and 2 Nubp2 chains. Requires [4Fe-4S] cluster as cofactor.

The protein resides in the cytoplasm. Functionally, component of the cytosolic iron-sulfur (Fe/S) protein assembly (CIA) machinery. Required for maturation of extramitochondrial Fe-S proteins. The Nubp1-Nubp2 heterotetramer forms a Fe-S scaffold complex, mediating the de novo assembly of an Fe-S cluster and its transfer to target apoproteins. The polypeptide is Cytosolic Fe-S cluster assembly factor Nubp2 homolog (Drosophila persimilis (Fruit fly)).